The following is a 485-amino-acid chain: GTPase Der (485 aa).

EngA-type G domains follow at residues 3–167 and 176–349; these read PTIA…PEPE and PVFA…NAAM. Residues 9 to 16, 56 to 60, 119 to 122, 182 to 189, 229 to 233, and 294 to 297 each bind GTP; these read GRPNVGKS, DTGGF, NKGE, DTAGV, and NKWD. Residues 350–434 form the KH-like domain; sequence IKMPTPKITR…PLRIQYNVSE (85 aa). The disordered stretch occupies residues 435 to 485; it reads NPYENAEDKPKKKPLRRVSLSNRIEKREGRKEEKNRFKKKTKVSVKKQFSK. Over residues 457–469 the composition is skewed to basic and acidic residues; it reads RIEKREGRKEEKN. The span at 470 to 485 shows a compositional bias: basic residues; that stretch reads RFKKKTKVSVKKQFSK.

It belongs to the TRAFAC class TrmE-Era-EngA-EngB-Septin-like GTPase superfamily. EngA (Der) GTPase family. As to quaternary structure, associates with the 50S ribosomal subunit.

Functionally, GTPase that plays an essential role in the late steps of ribosome biogenesis. In Neisseria gonorrhoeae (strain NCCP11945), this protein is GTPase Der.